The following is a 266-amino-acid chain: MGQKIHPTGFRLAVSRNWASRWYANNNNFAAMLQEDIGVREYLKKKLKNASVGRVIIERPAKNARITIFSSRPGVVIGKKGEDIELLKTELQRRMGVPVHVNIEEIRKPETDAQLIADSITQQLERRIMFRRAMKRAMQNAMRLGAQGIKIMSAGRLNGIEIARTEWYREGRVPLHTLRADIDYATSEAKTTYGVIGVKVWVYKGDTLGRNDAPVVEEVTEDKRPRRNARPGDRRPRRDGEGGAPGARRGGPRRGAGKPEDGKTGE.

Residues 39-107 (VREYLKKKLK…PVHVNIEEIR (69 aa)) form the KH type-2 domain. The tract at residues 214 to 266 (PVVEEVTEDKRPRRNARPGDRRPRRDGEGGAPGARRGGPRRGAGKPEDGKTGE) is disordered. 2 stretches are compositionally biased toward basic and acidic residues: residues 230–241 (RPGDRRPRRDGE) and 257–266 (GKPEDGKTGE).

This sequence belongs to the universal ribosomal protein uS3 family. Part of the 30S ribosomal subunit. Forms a tight complex with proteins S10 and S14.

Its function is as follows. Binds the lower part of the 30S subunit head. Binds mRNA in the 70S ribosome, positioning it for translation. The protein is Small ribosomal subunit protein uS3 of Burkholderia thailandensis (strain ATCC 700388 / DSM 13276 / CCUG 48851 / CIP 106301 / E264).